The chain runs to 116 residues: Ribonuclease P protein component (116 aa).

It belongs to the RnpA family. Consists of a catalytic RNA component (M1 or rnpB) and a protein subunit.

The catalysed reaction is Endonucleolytic cleavage of RNA, removing 5'-extranucleotides from tRNA precursor.. In terms of biological role, RNaseP catalyzes the removal of the 5'-leader sequence from pre-tRNA to produce the mature 5'-terminus. It can also cleave other RNA substrates such as 4.5S RNA. The protein component plays an auxiliary but essential role in vivo by binding to the 5'-leader sequence and broadening the substrate specificity of the ribozyme. The protein is Ribonuclease P protein component of Picosynechococcus sp. (strain ATCC 27264 / PCC 7002 / PR-6) (Agmenellum quadruplicatum).